The primary structure comprises 874 residues: Alanine--tRNA ligase (874 aa).

Zn(2+) is bound by residues His-565, His-569, Cys-666, and His-670.

Belongs to the class-II aminoacyl-tRNA synthetase family. It depends on Zn(2+) as a cofactor.

Its subcellular location is the cytoplasm. The enzyme catalyses tRNA(Ala) + L-alanine + ATP = L-alanyl-tRNA(Ala) + AMP + diphosphate. Functionally, catalyzes the attachment of alanine to tRNA(Ala) in a two-step reaction: alanine is first activated by ATP to form Ala-AMP and then transferred to the acceptor end of tRNA(Ala). Also edits incorrectly charged Ser-tRNA(Ala) and Gly-tRNA(Ala) via its editing domain. This Polynucleobacter asymbioticus (strain DSM 18221 / CIP 109841 / QLW-P1DMWA-1) (Polynucleobacter necessarius subsp. asymbioticus) protein is Alanine--tRNA ligase.